Consider the following 141-residue polypeptide: Large-conductance mechanosensitive channel (141 aa).

Helical transmembrane passes span 17–37 (MDLA…ASIV), 40–60 (LIMP…LFIA), and 86–106 (GNFV…FIIV).

It belongs to the MscL family. Homopentamer.

It localises to the cell inner membrane. Its function is as follows. Channel that opens in response to stretch forces in the membrane lipid bilayer. May participate in the regulation of osmotic pressure changes within the cell. The sequence is that of Large-conductance mechanosensitive channel from Thiobacillus denitrificans (strain ATCC 25259 / T1).